A 164-amino-acid polypeptide reads, in one-letter code: UPF0304 protein YfbU (164 aa).

It belongs to the UPF0304 family.

This chain is UPF0304 protein YfbU, found in Salmonella choleraesuis (strain SC-B67).